A 234-amino-acid chain; its full sequence is Orotidine 5'-phosphate decarboxylase (234 aa).

Substrate-binding positions include Asp-14, Lys-36, 63 to 72, Thr-118, Arg-179, Gln-188, Gly-208, and Arg-209; that span reads DMKLLDIDNT. The active-site Proton donor is Lys-65.

This sequence belongs to the OMP decarboxylase family. Type 1 subfamily. In terms of assembly, homodimer.

It catalyses the reaction orotidine 5'-phosphate + H(+) = UMP + CO2. It participates in pyrimidine metabolism; UMP biosynthesis via de novo pathway; UMP from orotate: step 2/2. Functionally, catalyzes the decarboxylation of orotidine 5'-monophosphate (OMP) to uridine 5'-monophosphate (UMP). This Rhizobium meliloti (strain 1021) (Ensifer meliloti) protein is Orotidine 5'-phosphate decarboxylase.